A 91-amino-acid chain; its full sequence is C-C motif chemokine 5 (91 aa).

A signal peptide spans 1–23 (MKISAAVLTVVLMAASLCAPASA). Disulfide bonds link Cys-33/Cys-57 and Cys-34/Cys-73.

The protein belongs to the intercrine beta (chemokine CC) family.

The protein localises to the secreted. Functionally, chemoattractant for blood monocytes, memory T-helper cells and eosinophils. Causes the release of histamine from basophils and activates eosinophils. May activate several chemokine receptors including CCR1, CCR3, CCR4 and CCR5. May also be an agonist of the G protein-coupled receptor GPR75. Together with GPR75, may play a role in neuron survival through activation of a downstream signaling pathway involving the PI3, Akt and MAP kinases. By activating GPR75 may also play a role in insulin secretion by islet cells. The protein is C-C motif chemokine 5 (CCL5) of Sigmodon hispidus (Hispid cotton rat).